A 981-amino-acid polypeptide reads, in one-letter code: Rab3 GTPase-activating protein catalytic subunit (981 aa).

Phosphoserine occurs at positions 83, 379, 537, 579, 581, and 590. The interval 592 to 613 is disordered; it reads TEELKGNGQESGKKGGPKEMAN. At Ser-664 the chain carries Phosphoserine. Thr-908 carries the post-translational modification Phosphothreonine. The interval 908-937 is disordered; sequence TPPEEELKRMGSPEERRQNSVSDFPPPAGR. A compositionally biased stretch (basic and acidic residues) spans 912–925; sequence EELKRMGSPEERRQ.

This sequence belongs to the Rab3-GAP catalytic subunit family. As to quaternary structure, the Rab3 GTPase-activating complex is a heterodimer composed of RAB3GAP1 and RAB3GAP2. The Rab3 GTPase-activating complex interacts with DMXL2. Interacts with LMAN1. As to expression, ubiquitous.

The protein resides in the cytoplasm. It is found in the endoplasmic reticulum. It localises to the golgi apparatus. The protein localises to the cis-Golgi network. Catalytic subunit of the Rab3 GTPase-activating (Rab3GAP) complex composed of RAB3GAP1 and RAB3GAP2, which has GTPase-activating protein (GAP) activity towards various Rab3 subfamily members (RAB3A, RAB3B, RAB3C and RAB3D), RAB5A and RAB43, and guanine nucleotide exchange factor (GEF) activity towards RAB18. As part of the Rab3GAP complex, acts as a GAP for Rab3 proteins by converting active RAB3-GTP to the inactive form RAB3-GDP. Rab3 proteins are involved in regulated exocytosis of neurotransmitters and hormones. The Rab3GAP complex, acts as a GEF for RAB18 by promoting the conversion of inactive RAB18-GDP to the active form RAB18-GTP. Recruits and stabilizes RAB18 at the cis-Golgi membrane in fibroblasts where RAB18 is most likely activated. Also involved in RAB18 recruitment at the endoplasmic reticulum (ER) membrane where it maintains proper ER structure. Required for normal eye and brain development. May participate in neurodevelopmental processes such as proliferation, migration and differentiation before synapse formation, and non-synaptic vesicular release of neurotransmitters. In Homo sapiens (Human), this protein is Rab3 GTPase-activating protein catalytic subunit.